Here is a 366-residue protein sequence, read N- to C-terminus: Alanine racemase (366 aa).

The Proton acceptor; specific for D-alanine role is filled by lysine 40. Lysine 40 is modified (N6-(pyridoxal phosphate)lysine). Arginine 136 provides a ligand contact to substrate. The Proton acceptor; specific for L-alanine role is filled by tyrosine 263. Methionine 310 provides a ligand contact to substrate.

The protein belongs to the alanine racemase family. Pyridoxal 5'-phosphate serves as cofactor.

The enzyme catalyses L-alanine = D-alanine. The protein operates within amino-acid biosynthesis; D-alanine biosynthesis; D-alanine from L-alanine: step 1/1. Its function is as follows. Catalyzes the interconversion of L-alanine and D-alanine. May also act on other amino acids. This is Alanine racemase (alr) from Streptococcus pyogenes serotype M28 (strain MGAS6180).